Here is a 548-residue protein sequence, read N- to C-terminus: Chaperonin GroEL (548 aa).

ATP-binding positions include Thr-30–Pro-33, Lys-51, Asp-87–Thr-91, Gly-415, and Asp-496. The segment at Ser-527 to Phe-548 is disordered. A compositionally biased stretch (gly residues) spans Gly-538–Phe-548.

It belongs to the chaperonin (HSP60) family. Forms a cylinder of 14 subunits composed of two heptameric rings stacked back-to-back. Interacts with the co-chaperonin GroES.

The protein localises to the cytoplasm. It catalyses the reaction ATP + H2O + a folded polypeptide = ADP + phosphate + an unfolded polypeptide.. Together with its co-chaperonin GroES, plays an essential role in assisting protein folding. The GroEL-GroES system forms a nano-cage that allows encapsulation of the non-native substrate proteins and provides a physical environment optimized to promote and accelerate protein folding. The sequence is that of Chaperonin GroEL from Rickettsia akari (strain Hartford).